The primary structure comprises 76 residues: Attractin (76 aa).

The signal sequence occupies residues 1–18 (MKVAIIILSLALVAAVFA). 3 disulfides stabilise this stretch: Cys-22/Cys-59, Cys-31/Cys-51, and Cys-38/Cys-44. An N-linked (GlcNAc...) asparagine glycan is attached at Asn-26.

Binds to temptin and enticin. Produced by the albumen gland of the egg cordons.

It is found in the secreted. Water-borne pheromone that attract the marine mollusk Aplysia into breeding aggregations and coordinate male and female reproductive behavior within the aggregation. This Aplysia californica (California sea hare) protein is Attractin (ATT).